Consider the following 336-residue polypeptide: Phospho-N-acetylmuramoyl-pentapeptide-transferase (336 aa).

A run of 10 helical transmembrane segments spans residues 1–21 (MLPL…SLFL), 56–76 (IPTA…LLLF), 78–98 (IQLW…ALGW), 124–144 (CLAA…FLSF), 148–168 (FLGI…FAIA), 184–204 (GLDG…LVVA), 210–230 (PWAF…LGFL), 239–259 (VFMG…CAVL), 264–284 (FLLL…IVQV), and 314–334 (VVRN…IAVF).

This sequence belongs to the glycosyltransferase 4 family. MraY subfamily. The cofactor is Mg(2+).

It localises to the cell inner membrane. It catalyses the reaction UDP-N-acetyl-alpha-D-muramoyl-L-alanyl-gamma-D-glutamyl-meso-2,6-diaminopimeloyl-D-alanyl-D-alanine + di-trans,octa-cis-undecaprenyl phosphate = di-trans,octa-cis-undecaprenyl diphospho-N-acetyl-alpha-D-muramoyl-L-alanyl-D-glutamyl-meso-2,6-diaminopimeloyl-D-alanyl-D-alanine + UMP. Its pathway is cell wall biogenesis; peptidoglycan biosynthesis. Functionally, catalyzes the initial step of the lipid cycle reactions in the biosynthesis of the cell wall peptidoglycan: transfers peptidoglycan precursor phospho-MurNAc-pentapeptide from UDP-MurNAc-pentapeptide onto the lipid carrier undecaprenyl phosphate, yielding undecaprenyl-pyrophosphoryl-MurNAc-pentapeptide, known as lipid I. This is Phospho-N-acetylmuramoyl-pentapeptide-transferase from Chlamydia trachomatis serovar L2b (strain UCH-1/proctitis).